The primary structure comprises 632 residues: MTTAAHAETLGFQTEVKQLLQLMIHSLYSNREIFLRELISNAADACDKLRYEALENDTLYGDDSELRIEIEHDAEAGTVTVRDNGIGMSRDEVIQNLGTIARSGTAEFLQQLSGEKQKDAKLIGQFGVGFYSGFIVSDEITVRTRRVDQEQGVQWHSRGEGEFDIADIDKPERGTEIVLHLKEDAKEFADAERLKHLVRTYSDHIEVPVRMPKVEKAHDEEGNEIEGSETVTWETVNEATALWVRPKEEISDDEYKAFYKHVAHDFSDPLTWSHNKVEGKLEYTSLLYVPGRAPFDLYQREGVRGLKLYVQRVFIMDDAEQFLPLYLRFIKGVVDSKDLSLNVSRELLQKDPQVDKLKSALTKRSLDMLKKLAKDEEAYQTFWNAFGNVLKEGPAEDFANRDKIADLLRFSSTQTDSATQDQSLAGYVSRMKEGQQKIYYLVADGFNAASHSPHLEIFRKKGIEVLLLHDRIDEWLMSHLTEYDGKAFADVAKGDLDLDDMADEEEKKAQEETAKAKAPLIERVKTALGDEVQEVRITHRLTDSPACVVLSEHDMGYQMRRLMEAAGQPLPEVKPILELNPEHSLVARLEGADDSVFNDLARILLDQAIIAEGGHLEDPATYVQRLNKLLSH.

The interval Met-1–Arg-345 is a; substrate-binding. The interval Glu-346 to Arg-561 is b. Residues Leu-562–His-632 are c.

The protein belongs to the heat shock protein 90 family. In terms of assembly, homodimer.

It is found in the cytoplasm. Molecular chaperone. Has ATPase activity. In Chromohalobacter salexigens (strain ATCC BAA-138 / DSM 3043 / CIP 106854 / NCIMB 13768 / 1H11), this protein is Chaperone protein HtpG.